We begin with the raw amino-acid sequence, 1127 residues long: Genome polyprotein (1127 aa).

The segment at 1-15 (MNNQRKKARSTPFNM) is interaction with host EXOC1. Residues 1 to 101 (MNNQRKKARS…LNILNRRRRT (101 aa)) lie on the Cytoplasmic side of the membrane. The hydrophobic; homodimerization of capsid protein C stretch occupies residues 37-72 (MLQGRGPLKLFMALVALPRFLTIPPTAGILKRWGTI). A propeptide spans 101–114 (TAGVIIMLIPTVMA) (ER anchor for the capsid protein C, removed in mature form by serine protease NS3). A helical transmembrane segment spans residues 102–122 (AGVIIMLIPTVMAFHLTTRNG). Residues 123–238 (EPHMIVSRQE…GAWKRACRME (116 aa)) lie on the Extracellular side of the membrane. Residue Asn-183 is glycosylated (N-linked (GlcNAc...) asparagine; by host). The chain crosses the membrane as a helical span at residues 239 to 259 (TWILRHPGFTIMAAILAYTIG). Residues 260–265 (TTHFQR) are Cytoplasmic-facing. The chain crosses the membrane as a helical span at residues 266–280 (GLILILQTAVAPSMT). Over 281-725 (MRCIGISNRD…LHQVFGAIYG (445 aa)) the chain is Extracellular. Intrachain disulfides connect Cys-283/Cys-310, Cys-340/Cys-401, Cys-354/Cys-385, and Cys-372/Cys-396. A glycan (N-linked (GlcNAc...) asparagine; by host) is linked at Asn-347. The fusion peptide stretch occupies residues 378–391 (DRGWGNGCGLFGKG). The N-linked (GlcNAc...) asparagine; by host glycan is linked to Asn-433. 2 cysteine pairs are disulfide-bonded: Cys-465–Cys-565 and Cys-582–Cys-613. Residues 726–746 (AAFSGVSWTMKILIGVIITWI) form a helical membrane-spanning segment. The Cytoplasmic portion of the chain corresponds to 747-754 (GMNSRSTS). Residues 755–773 (LSVSLVLVGVITLYLGAMV) traverse the membrane as a helical segment. The Extracellular segment spans residues 774-1127 (QADSGCVVSW…ENLVTSLVTA (354 aa)). 5 cysteine pairs are disulfide-bonded: Cys-779-Cys-790, Cys-830-Cys-918, Cys-954-Cys-998, Cys-1055-Cys-1104, and Cys-1066-Cys-1088. 2 N-linked (GlcNAc...) asparagine; by host glycosylation sites follow: Asn-905 and Asn-982.

Homodimer. Interacts (via N-terminus) with host EXOC1 (via C-terminus); this interaction results in EXOC1 degradation through the proteasome degradation pathway. As to quaternary structure, forms heterodimers with envelope protein E in the endoplasmic reticulum and Golgi. In terms of assembly, homodimer; in the endoplasmic reticulum and Golgi. Interacts with protein prM. Interacts with non-structural protein 1. Homodimer; Homohexamer when secreted. Interacts with envelope protein E. Post-translationally, specific enzymatic cleavages in vivo yield mature proteins. Cleavages in the lumen of endoplasmic reticulum are performed by host signal peptidase, wereas cleavages in the cytoplasmic side are performed by the Serine protease NS3. Signal cleavage at the 2K-4B site requires a prior NS3 protease-mediated cleavage at the 4A-2K site. Cleaved in post-Golgi vesicles by a host furin, releasing the mature small envelope protein M, and peptide pr. This cleavage is incomplete as up to 30% of viral particles still carry uncleaved prM. In terms of processing, N-glycosylated. Post-translationally, N-glycosylated. The excreted form is glycosylated and this is required for efficient secretion of the protein from infected cells.

The protein localises to the virion. The protein resides in the host nucleus. It localises to the host cytoplasm. It is found in the host perinuclear region. Its subcellular location is the secreted. The protein localises to the virion membrane. The protein resides in the host endoplasmic reticulum membrane. Functionally, plays a role in virus budding by binding to the cell membrane and gathering the viral RNA into a nucleocapsid that forms the core of a mature virus particle. During virus entry, may induce genome penetration into the host cytoplasm after hemifusion induced by the surface proteins. Can migrate to the cell nucleus where it modulates host functions. Overcomes the anti-viral effects of host EXOC1 by sequestering and degrading the latter through the proteasome degradation pathway. Inhibits RNA silencing by interfering with host Dicer. In terms of biological role, prevents premature fusion activity of envelope proteins in trans-Golgi by binding to envelope protein E at pH6.0. After virion release in extracellular space, gets dissociated from E dimers. Its function is as follows. Acts as a chaperone for envelope protein E during intracellular virion assembly by masking and inactivating envelope protein E fusion peptide. prM is the only viral peptide matured by host furin in the trans-Golgi network probably to avoid catastrophic activation of the viral fusion activity in acidic GolGi compartment prior to virion release. prM-E cleavage is inefficient, and many virions are only partially matured. These uncleaved prM would play a role in immune evasion. Functionally, may play a role in virus budding. Exerts cytotoxic effects by activating a mitochondrial apoptotic pathway through M ectodomain. May display a viroporin activity. Binds to host cell surface receptor and mediates fusion between viral and cellular membranes. Envelope protein is synthesized in the endoplasmic reticulum in the form of heterodimer with protein prM. They play a role in virion budding in the ER, and the newly formed immature particle is covered with 60 spikes composed of heterodimer between precursor prM and envelope protein E. The virion is transported to the Golgi apparatus where the low pH causes dissociation of PrM-E heterodimers and formation of E homodimers. prM-E cleavage is inefficient, and many virions are only partially matured. These uncleaved prM would play a role in immune evasion. In terms of biological role, involved in immune evasion, pathogenesis and viral replication. Once cleaved off the polyprotein, is targeted to three destinations: the viral replication cycle, the plasma membrane and the extracellular compartment. Essential for viral replication. Required for formation of the replication complex and recruitment of other non-structural proteins to the ER-derived membrane structures. Excreted as a hexameric lipoparticle that plays a role against host immune response. Antagonizing the complement function. Binds to the host macrophages and dendritic cells. Inhibits signal transduction originating from Toll-like receptor 3 (TLR3). Its function is as follows. Disrupts the host endothelial glycocalyx layer of host pulmonary microvascular endothelial cells, inducing degradation of sialic acid and shedding of heparan sulfate proteoglycans. NS1 induces expression of sialidases, heparanase, and activates cathepsin L, which activates heparanase via enzymatic cleavage. These effects are probably linked to the endothelial hyperpermeability observed in severe dengue disease. This Dengue virus type 2 (strain China/D2-04) (DENV-2) protein is Genome polyprotein.